Reading from the N-terminus, the 807-residue chain is MPKQDSLWLKSLRWIQKHLVHTIVVPQDPFADLNLDASRPLAYVMKTESLSDIAALSEITTKLGLPSPYEPLVVNGVVAPRVVCLEGRKPLFGERASNEPFLECFMRLLAVHKEKPELDIQLVPVSLYWGRTPGKEDDTMKAAVLERENPTWLRKCLMILFLGRHNFVQFSNAVSLRYMADEHGTDMGIAHKLARVARVHFRRQRKVMTGPVLPNRQAMFHSLLKSESLRKAIQEEAASKKISETQARETAIEYLDEIAANYSDSLVRIAERFLTWLWNKLYSGINIKGAEQIRQLHHDGHEIVYVPCHRSHMDYLLLSYILYYQGMVPPHIAAGINLNFWPAGPLFRRGGAFFIRRSFNGNKLYTAVFREYLDQLFAKGYSVEYFSEGGRSRTGRLLAPKTGMIAMTINSVLRGIERPVTLVPVYLGYDHVMEVATYHKELSGKKKQKESVWQVFGAIRKLGNFGQGYVNFGEPITLQNFLNETAPNWRTEVADDPEQKPTWLTPAVNVLANRVMTRINDAAAASSITLTSLVLLASEQNALERCLLERQLDLYLTLLKRVPYTSFTSVAEGDGKHLVQQGLELNKFSIHADPLGEIVSIDANQAISMTYYRNNIIHLFIIPSLIASCLTNNKQISRAHILGIVSDFYPLLKAELFMGIKDLPSYVNQVLDLLIEQGLVQESDTLSVVTEHTSQMLLLAGSVSETLQRYAIIFNLLAHRPKMERSELESESHLLAQRLGALHGITAPEFYDKKLYNTLSVKLKELGYFSEKEDKSDVERIRDQANSLLRASVRQTIVASVTAEHIV.

The short motif at 308–313 (CHRSHM) is the HXXXXD motif element.

Belongs to the GPAT/DAPAT family.

It localises to the cell inner membrane. The catalysed reaction is sn-glycerol 3-phosphate + an acyl-CoA = a 1-acyl-sn-glycero-3-phosphate + CoA. It participates in phospholipid metabolism; CDP-diacylglycerol biosynthesis; CDP-diacylglycerol from sn-glycerol 3-phosphate: step 1/3. The chain is Glycerol-3-phosphate acyltransferase from Shewanella sp. (strain ANA-3).